We begin with the raw amino-acid sequence, 446 residues long: Iroquois-class homeodomain protein IRX-6 (446 aa).

Residues 146–208 (GAGRRKNATR…NARRRLKKEN (63 aa)) constitute a DNA-binding region (homeobox). Disordered stretches follow at residues 208-273 (NKMT…EDEE) and 362-394 (AVEGAPPARPRPRSPECRMIPGQPPASARRLSV). The span at 217-226 (KGGEERKAEG) shows a compositional bias: basic and acidic residues. Over residues 256 to 273 (LEDLEEEEEEEEEAEDEE) the composition is skewed to acidic residues.

Belongs to the TALE/IRO homeobox family.

The protein localises to the nucleus. In terms of biological role, transcription factor. Binds to the iroquois binding site (IBS) motif of target genes to regulate gene expression; functions as a transcriptional activator or repressor. Modulates expression of RCVRN, VSX1, BHLHE22/BHLHB5 and TACR3/Nk3r. Required downstream of retinal bipolar cell specification for the terminal differentiation of type 2, type 3a and possibly type 6 bipolar cells. This chain is Iroquois-class homeodomain protein IRX-6 (IRX6), found in Homo sapiens (Human).